The sequence spans 478 residues: MTLSFVTRWRDELPETYTALSPTPLNNARLIWHNTELANTLSIPSSLFKNGAGVWGGEALLPGMSPLAQVYSGHQFGVWAGQLGDGRGILLGEQLLADGTTMDWHLKGAGLTPYSRMGDGRAVLRSTIRESLASEAMHYLGIPTTRALSIVTSDSPVYRETAEPGAMLMRVAPSHLRFGHFEHFYYRRESEKVRQLADFAIRHYWSHLEDDEDKYRLWFSDVVARTASLIAQWQTVGFAHGVMNTDNMSLLGLTLDYGPFGFLDDYEPGFICNHSDHQGRYSFDNQPAVALWNLQRLAQTLSPFVAVDALNEALDSYQQVLLTHYGQRMRQKLGFITEQKEDNALLNELFSLMARERSDYTRTFRMLSLTEQHSTASPLRDEFIDRAAFDGWFARYRGRLQQDEVSDSERQQLMQSVNPALVLRNWLAQRAIEAAEKGDMTELHRLHGALRNPFSDRDDDYVSRPPDWGKRLEVSCSS.

Positions 84, 86, 87, 107, 119, 120, 170, and 177 each coordinate ATP. Asp246 functions as the Proton acceptor in the catalytic mechanism. Mg(2+) is bound by residues Asn247 and Asp256. ATP is bound at residue Asp256.

Belongs to the SELO family. Mg(2+) serves as cofactor. The cofactor is Mn(2+).

It carries out the reaction L-seryl-[protein] + ATP = 3-O-(5'-adenylyl)-L-seryl-[protein] + diphosphate. The catalysed reaction is L-threonyl-[protein] + ATP = 3-O-(5'-adenylyl)-L-threonyl-[protein] + diphosphate. The enzyme catalyses L-tyrosyl-[protein] + ATP = O-(5'-adenylyl)-L-tyrosyl-[protein] + diphosphate. It catalyses the reaction L-histidyl-[protein] + UTP = N(tele)-(5'-uridylyl)-L-histidyl-[protein] + diphosphate. It carries out the reaction L-seryl-[protein] + UTP = O-(5'-uridylyl)-L-seryl-[protein] + diphosphate. The catalysed reaction is L-tyrosyl-[protein] + UTP = O-(5'-uridylyl)-L-tyrosyl-[protein] + diphosphate. In terms of biological role, nucleotidyltransferase involved in the post-translational modification of proteins. It can catalyze the addition of adenosine monophosphate (AMP) or uridine monophosphate (UMP) to a protein, resulting in modifications known as AMPylation and UMPylation. This Shigella sonnei (strain Ss046) protein is Protein nucleotidyltransferase YdiU.